Reading from the N-terminus, the 178-residue chain is ATP synthase subunit delta (178 aa).

Belongs to the ATPase delta chain family. In terms of assembly, F-type ATPases have 2 components, F(1) - the catalytic core - and F(0) - the membrane proton channel. F(1) has five subunits: alpha(3), beta(3), gamma(1), delta(1), epsilon(1). F(0) has three main subunits: a(1), b(2) and c(10-14). The alpha and beta chains form an alternating ring which encloses part of the gamma chain. F(1) is attached to F(0) by a central stalk formed by the gamma and epsilon chains, while a peripheral stalk is formed by the delta and b chains.

It is found in the cell inner membrane. Its function is as follows. F(1)F(0) ATP synthase produces ATP from ADP in the presence of a proton or sodium gradient. F-type ATPases consist of two structural domains, F(1) containing the extramembraneous catalytic core and F(0) containing the membrane proton channel, linked together by a central stalk and a peripheral stalk. During catalysis, ATP synthesis in the catalytic domain of F(1) is coupled via a rotary mechanism of the central stalk subunits to proton translocation. Functionally, this protein is part of the stalk that links CF(0) to CF(1). It either transmits conformational changes from CF(0) to CF(1) or is implicated in proton conduction. In Aromatoleum aromaticum (strain DSM 19018 / LMG 30748 / EbN1) (Azoarcus sp. (strain EbN1)), this protein is ATP synthase subunit delta.